The primary structure comprises 150 residues: Deoxyuridine 5'-triphosphate nucleotidohydrolase (150 aa).

Residues 69–71, Asn-82, 86–88, and Met-96 each bind substrate; these read RSG and LID.

The protein belongs to the dUTPase family. It depends on Mg(2+) as a cofactor.

The catalysed reaction is dUTP + H2O = dUMP + diphosphate + H(+). It participates in pyrimidine metabolism; dUMP biosynthesis; dUMP from dCTP (dUTP route): step 2/2. Functionally, this enzyme is involved in nucleotide metabolism: it produces dUMP, the immediate precursor of thymidine nucleotides and it decreases the intracellular concentration of dUTP so that uracil cannot be incorporated into DNA. This Acinetobacter baumannii (strain AB307-0294) protein is Deoxyuridine 5'-triphosphate nucleotidohydrolase.